The following is a 372-amino-acid chain: 4-hydroxy-3-methylbut-2-en-1-yl diphosphate synthase (flavodoxin) (372 aa).

4 residues coordinate [4Fe-4S] cluster: C270, C273, C305, and E312.

This sequence belongs to the IspG family. [4Fe-4S] cluster is required as a cofactor.

It catalyses the reaction (2E)-4-hydroxy-3-methylbut-2-enyl diphosphate + oxidized [flavodoxin] + H2O + 2 H(+) = 2-C-methyl-D-erythritol 2,4-cyclic diphosphate + reduced [flavodoxin]. It functions in the pathway isoprenoid biosynthesis; isopentenyl diphosphate biosynthesis via DXP pathway; isopentenyl diphosphate from 1-deoxy-D-xylulose 5-phosphate: step 5/6. Its function is as follows. Converts 2C-methyl-D-erythritol 2,4-cyclodiphosphate (ME-2,4cPP) into 1-hydroxy-2-methyl-2-(E)-butenyl 4-diphosphate. The sequence is that of 4-hydroxy-3-methylbut-2-en-1-yl diphosphate synthase (flavodoxin) from Salmonella arizonae (strain ATCC BAA-731 / CDC346-86 / RSK2980).